The sequence spans 364 residues: MSNSLGKLFQITSFGESHGDCVGVVIDGVPAGLAINVDEIQVEVDKRKSRAKAHATPRCEDDRIEIFSGILNNFTTGAPICLVIWNKNIDSSEYERTRSKIRPGHADFTGFVKYGGFNDFRGGGRFSGRITAGHVMAGAIARKLISTIGIEVIGYTAELGGIVAKLPKTKDIRQNISQSDVNCPDLTATKKMLALIQQAAEEGDSLGGVVECLGLNLPVGLGEPVFDTLEGELAKAMFAIPAVKGVEFGAGFEASRLRGSKNNDPFSIQANHIRTTSNKCGGVLGGISDGMPLQFRVAVKPTPSISLSQPTVNIDTMTNTSLEIRGRHDTCIVPRAVSVVEAMTCIVLADLALRAGMIPRVIKQ.

Residue Arg47 participates in NADP(+) binding. Residues 125–127 (RFS), Gly285, 300–304 (KPTPS), and Arg327 each bind FMN.

The protein belongs to the chorismate synthase family. As to quaternary structure, homotetramer. Requires FMNH2 as cofactor.

The enzyme catalyses 5-O-(1-carboxyvinyl)-3-phosphoshikimate = chorismate + phosphate. It participates in metabolic intermediate biosynthesis; chorismate biosynthesis; chorismate from D-erythrose 4-phosphate and phosphoenolpyruvate: step 7/7. Catalyzes the anti-1,4-elimination of the C-3 phosphate and the C-6 proR hydrogen from 5-enolpyruvylshikimate-3-phosphate (EPSP) to yield chorismate, which is the branch point compound that serves as the starting substrate for the three terminal pathways of aromatic amino acid biosynthesis. This reaction introduces a second double bond into the aromatic ring system. The sequence is that of Chorismate synthase from Dehalococcoides mccartyi (strain ATCC BAA-2266 / KCTC 15142 / 195) (Dehalococcoides ethenogenes (strain 195)).